Here is a 322-residue protein sequence, read N- to C-terminus: Arginase-1 (322 aa).

A disordered region spans residues 1-27; that stretch reads MSFKSQSIGIIGAPFSKGQPRGGVEEG. Serine 7 carries the post-translational modification Phosphoserine. Lysine 17 carries the N6-succinyllysine modification. At serine 72 the chain carries Phosphoserine. Residue lysine 75 is modified to N6-succinyllysine. The Mn(2+) site is built by histidine 101, aspartate 124, histidine 126, and aspartate 128. Substrate-binding positions include 126–130 and 137–139; these read HTDIN and TGN. Serine 163 is modified (phosphoserine). Aspartate 183 serves as a coordination point for substrate. A Phosphoserine modification is found at serine 217. 2 residues coordinate Mn(2+): aspartate 232 and aspartate 234. The substrate site is built by threonine 246 and glutamate 277.

The protein belongs to the arginase family. In terms of assembly, homotrimer. Interacts with CMTM6. Requires Mn(2+) as cofactor.

Its subcellular location is the cytoplasm. It carries out the reaction L-arginine + H2O = urea + L-ornithine. It functions in the pathway nitrogen metabolism; urea cycle; L-ornithine and urea from L-arginine: step 1/1. This Sus scrofa (Pig) protein is Arginase-1 (ARG1).